A 223-amino-acid chain; its full sequence is Probable transaldolase (223 aa).

The Schiff-base intermediate with substrate role is filled by Lys-91.

The protein belongs to the transaldolase family. Type 3B subfamily.

It is found in the cytoplasm. It carries out the reaction D-sedoheptulose 7-phosphate + D-glyceraldehyde 3-phosphate = D-erythrose 4-phosphate + beta-D-fructose 6-phosphate. It participates in carbohydrate degradation; pentose phosphate pathway; D-glyceraldehyde 3-phosphate and beta-D-fructose 6-phosphate from D-ribose 5-phosphate and D-xylulose 5-phosphate (non-oxidative stage): step 2/3. Transaldolase is important for the balance of metabolites in the pentose-phosphate pathway. The protein is Probable transaldolase of Chlorobium phaeobacteroides (strain BS1).